We begin with the raw amino-acid sequence, 959 residues long: AP2-associated protein kinase 1 (959 aa).

Methionine 1 bears the N-acetylmethionine mark. The segment covering 1 to 11 has biased composition (basic and acidic residues); that stretch reads MKKFFDSRREQ. The tract at residues 1–27 is disordered; sequence MKKFFDSRREQGSSGLGSGSSGGGGSS. A Phosphoserine modification is found at serine 14. Gly residues predominate over residues 14-27; the sequence is SGLGSGSSGGGGSS. One can recognise a Protein kinase domain in the interval 46–315; sequence VTVDEVLAEG…QVSYFSFKLL (270 aa). Residues 52–60 and lysine 74 each bind ATP; that span reads LAEGGFALV. Residue aspartate 176 is the Proton acceptor of the active site. Tyrosine 234 is modified (phosphotyrosine). Serine 235 is modified (phosphoserine). Positions 340–385 are disordered; the sequence is SEAAVKKTQPKARLTDPIPTTETSIAPRQRPKAGQTQPNPGILPIQ. 2 positions are modified to phosphothreonine: threonine 354 and threonine 389. An Omega-N-methylarginine modification is found at arginine 391. Disordered regions lie at residues 398-514 and 578-630; these read PLPQ…AVHP and TAPQ…RAGH. Over residues 404–419 the composition is skewed to polar residues; sequence GPSNQPGLLPSVSQPK. Low complexity predominate over residues 420–435; it reads AQATPSQPLQSSQPKQ. Residue threonine 441 is modified to Phosphothreonine. Low complexity-rich tracts occupy residues 444–481, 494–510, and 578–603; these read QTPA…QPQQ, QQQQ…QQFQ, and TAPQ…KVQT. Threonine 604 carries the post-translational modification Phosphothreonine. Residues 609–625 show a composition bias toward polar residues; it reads IQGQKVGSLTPPSSPKT. Phosphoserine is present on serine 616. The residue at position 618 (threonine 618) is a Phosphothreonine. Phosphoserine occurs at positions 621, 622, 635, and 648. Threonine 651 bears the Phosphothreonine mark. 4 disordered regions span residues 662–699, 727–763, 837–857, and 923–943; these read SLNK…FDDD, GGSA…GGQA, PVAQ…TDSL, and ITKN…ESSL. Positions 670-694 are enriched in polar residues; that stretch reads TTTPSGSPRTSQQNVSNASEGSTWN. Serine 729 is subject to Phosphoserine. 2 stretches are compositionally biased toward polar residues: residues 738–752 and 842–857; these read QPTQ…SFSA and LPSQ…TDSL. The tract at residues 821-958 is clathrin-binding domain (CBD); sequence DKADVAVESL…SLLLVDQLID (138 aa). Serine 844, serine 935, and serine 936 each carry phosphoserine. Residues 929 to 942 are compositionally biased toward low complexity; it reads GGHSRNSSGSSESS.

Belongs to the protein kinase superfamily. Ser/Thr protein kinase family. As to quaternary structure, interacts (via CBD domain) with clathrin. Interacts with AP-2 complex. Interacts with NUMB. Interacts with alpha-adaptin. Interacts with EPS15 isoform 2. Interacts with membrane-bound activated NOTCH1 but not with the inactive full-length form of NOTCH1. Preferentially interacts with monoubiquitinated activated NOTCH1 compared to the non-ubiquitinated form. Autophosphorylated.

It is found in the cell membrane. The protein resides in the membrane. Its subcellular location is the clathrin-coated pit. It localises to the presynapse. The enzyme catalyses L-seryl-[protein] + ATP = O-phospho-L-seryl-[protein] + ADP + H(+). The catalysed reaction is L-threonyl-[protein] + ATP = O-phospho-L-threonyl-[protein] + ADP + H(+). Its activity is regulated as follows. Stimulated by clathrin. Regulates clathrin-mediated endocytosis by phosphorylating the AP2M1/mu2 subunit of the adaptor protein complex 2 (AP-2) which ensures high affinity binding of AP-2 to cargo membrane proteins during the initial stages of endocytosis. Preferentially, may phosphorylate substrates on threonine residues. Regulates phosphorylation of other AP-2 subunits as well as AP-2 localization and AP-2-mediated internalization of ligand complexes. Phosphorylates NUMB and regulates its cellular localization, promoting NUMB localization to endosomes. Binds to and stabilizes the activated form of NOTCH1, increases its localization in endosomes and regulates its transcriptional activity. The polypeptide is AP2-associated protein kinase 1 (Aak1) (Mus musculus (Mouse)).